We begin with the raw amino-acid sequence, 101 residues long: Small ribosomal subunit protein uS14 (101 aa).

Belongs to the universal ribosomal protein uS14 family. Part of the 30S ribosomal subunit. Contacts proteins S3 and S10.

In terms of biological role, binds 16S rRNA, required for the assembly of 30S particles and may also be responsible for determining the conformation of the 16S rRNA at the A site. The chain is Small ribosomal subunit protein uS14 from Ruthia magnifica subsp. Calyptogena magnifica.